A 99-amino-acid chain; its full sequence is Aspartyl/glutamyl-tRNA(Asn/Gln) amidotransferase subunit C (99 aa).

The protein belongs to the GatC family. Heterotrimer of A, B and C subunits.

It carries out the reaction L-glutamyl-tRNA(Gln) + L-glutamine + ATP + H2O = L-glutaminyl-tRNA(Gln) + L-glutamate + ADP + phosphate + H(+). It catalyses the reaction L-aspartyl-tRNA(Asn) + L-glutamine + ATP + H2O = L-asparaginyl-tRNA(Asn) + L-glutamate + ADP + phosphate + 2 H(+). Functionally, allows the formation of correctly charged Asn-tRNA(Asn) or Gln-tRNA(Gln) through the transamidation of misacylated Asp-tRNA(Asn) or Glu-tRNA(Gln) in organisms which lack either or both of asparaginyl-tRNA or glutaminyl-tRNA synthetases. The reaction takes place in the presence of glutamine and ATP through an activated phospho-Asp-tRNA(Asn) or phospho-Glu-tRNA(Gln). The polypeptide is Aspartyl/glutamyl-tRNA(Asn/Gln) amidotransferase subunit C (Leptothrix cholodnii (strain ATCC 51168 / LMG 8142 / SP-6) (Leptothrix discophora (strain SP-6))).